A 204-amino-acid polypeptide reads, in one-letter code: MIGRLQGILLEKQPPEILLNVQGVGYELLLPMTSFYDLPEIGQETTLFTHLVVREDAHLLFGFAQKTDRTLFRELIKTNGVGPKLALAILSAMSVEQFAYAIEREELSKLTKIPGVGKKTAERLLVELKGKFKGIKQSDFFVESTHIPLSPSIESHSESSSDEAISALIALGYKPAEAEKMVKRVAKPELTSEQVIREALKAAL.

Positions Met1–Ala64 are domain I. The tract at residues Gln65 to Glu143 is domain II. The segment at Ser144–Ser155 is flexible linker. A domain III region spans residues His156–Leu204.

It belongs to the RuvA family. Homotetramer. Forms an RuvA(8)-RuvB(12)-Holliday junction (HJ) complex. HJ DNA is sandwiched between 2 RuvA tetramers; dsDNA enters through RuvA and exits via RuvB. An RuvB hexamer assembles on each DNA strand where it exits the tetramer. Each RuvB hexamer is contacted by two RuvA subunits (via domain III) on 2 adjacent RuvB subunits; this complex drives branch migration. In the full resolvosome a probable DNA-RuvA(4)-RuvB(12)-RuvC(2) complex forms which resolves the HJ.

It localises to the cytoplasm. Its function is as follows. The RuvA-RuvB-RuvC complex processes Holliday junction (HJ) DNA during genetic recombination and DNA repair, while the RuvA-RuvB complex plays an important role in the rescue of blocked DNA replication forks via replication fork reversal (RFR). RuvA specifically binds to HJ cruciform DNA, conferring on it an open structure. The RuvB hexamer acts as an ATP-dependent pump, pulling dsDNA into and through the RuvAB complex. HJ branch migration allows RuvC to scan DNA until it finds its consensus sequence, where it cleaves and resolves the cruciform DNA. This is Holliday junction branch migration complex subunit RuvA from Haemophilus influenzae (strain 86-028NP).